The chain runs to 208 residues: Methyl-CpG-binding domain protein 3-like 2 (208 aa).

The tract at residues 1–89 (MGEPAFTSFP…HLEKPQQLCA (89 aa)) is interacts with MBD3.

This sequence belongs to the MBD3L family. Interacts (via N-terminus) with MBD3; the interaction is direct. Interacts with MTA1. Interacts with HDAC1. Interacts with HDAC2. Interacts with RBBP4. Interacts with RBBP7. As to expression, detected at low levels in several somatic tissues. Highly expressed in the ovarian teratocarcinoma cell line PA-1.

It is found in the nucleus. May displace the NuRD complex from chromatin. In Homo sapiens (Human), this protein is Methyl-CpG-binding domain protein 3-like 2 (MBD3L2).